A 366-amino-acid polypeptide reads, in one-letter code: tRNA-specific 2-thiouridylase MnmA (366 aa).

Residues 10–17 and Ile-36 each bind ATP; that span reads GLSGGVDS. Residue Cys-98 is the Nucleophile of the active site. Cys-98 and Cys-194 are disulfide-bonded. Gly-122 contributes to the ATP binding site. Residues 144–146 form an interaction with tRNA region; sequence KDQ. The active-site Cysteine persulfide intermediate is Cys-194. Positions 303 to 304 are interaction with tRNA; sequence RY.

Belongs to the MnmA/TRMU family.

Its subcellular location is the cytoplasm. The enzyme catalyses S-sulfanyl-L-cysteinyl-[protein] + uridine(34) in tRNA + AH2 + ATP = 2-thiouridine(34) in tRNA + L-cysteinyl-[protein] + A + AMP + diphosphate + H(+). Its function is as follows. Catalyzes the 2-thiolation of uridine at the wobble position (U34) of tRNA, leading to the formation of s(2)U34. In Chlorobaculum tepidum (strain ATCC 49652 / DSM 12025 / NBRC 103806 / TLS) (Chlorobium tepidum), this protein is tRNA-specific 2-thiouridylase MnmA.